The primary structure comprises 1059 residues: Ubiquitin carboxyl-terminal hydrolase 36 (1059 aa).

2 disordered regions span residues 24 to 49 and 94 to 148; these read VGNGSRAADEAKKTGGGGGDDSDSEM and SNNN…KPKR. A compositionally biased stretch (low complexity) spans 94-123; sequence SNNNNSSSCNGSNFGNSKVVGANGHDNGNN. Polar residues predominate over residues 130-139; that stretch reads QSESTQSGPS. The 309-residue stretch at 171 to 479 folds into the USP domain; that stretch reads TGMINVGNTC…NAYIMFYELD (309 aa). The Nucleophile role is filled by Cys-180. His-438 acts as the Proton acceptor in catalysis. Positions 505-673 are disordered; sequence TVSSSSPTHT…KTPLKSSVKT (169 aa). A phosphoserine mark is found at Ser-508 and Ser-510. The segment covering 528–539 has biased composition (polar residues); the sequence is GYSNGHATGSSN. Composition is skewed to low complexity over residues 540 to 560, 592 to 611, and 633 to 647; these read AQKTAIQFKQQQQHPQQNGLQ, NGNKSSSSSASNSNHNKSVN, and ATATATATATARPTA. Basic and acidic residues predominate over residues 655 to 664; it reads MTEDSSDKPK. Phosphothreonine occurs at positions 673 and 682. 3 disordered regions span residues 687-893, 926-998, and 1012-1059; these read LVPY…EAST, KELV…RYHN, and KYNR…QSSS. Ser-692 and Ser-694 each carry phosphoserine. Composition is skewed to low complexity over residues 729–739 and 752–765; these read TKTNGGSLTNG and SSSSSLASASASAA. At Ser-766 the chain carries Phosphoserine. The span at 766 to 776 shows a compositional bias: acidic residues; it reads SDDEDADEEEE. A compositionally biased stretch (polar residues) spans 779-795; that stretch reads KLTNGWQPQKQSQSLTQ. Positions 799–808 are enriched in pro residues; sequence PPSPKTPPSP. At Ser-801 the chain carries Phosphoserine. Thr-804 is subject to Phosphothreonine. Ser-807 carries the phosphoserine modification. The segment covering 825-839 has biased composition (acidic residues); the sequence is DNEDEDDDDDEDEEE. Polar residues-rich tracts occupy residues 842 to 862 and 876 to 893; these read QVVSTPSKNPRNPFAKSSTTP and KSQQQPRVGNGYQSEAST. Thr-846 and Thr-861 each carry phosphothreonine. Positions 926–940 are enriched in basic and acidic residues; it reads KELVAEAREQRQHDH. A compositionally biased stretch (low complexity) spans 1048–1059; it reads QQQQQQSQQSSS.

The protein belongs to the peptidase C19 family. Interacts with atms/PAF1, but not with CycT.

It localises to the nucleus. The protein localises to the nucleolus. It catalyses the reaction Thiol-dependent hydrolysis of ester, thioester, amide, peptide and isopeptide bonds formed by the C-terminal Gly of ubiquitin (a 76-residue protein attached to proteins as an intracellular targeting signal).. In terms of biological role, required for maintaining multiple types of adult stem cells, including male and female germline, epithelial follicle cell and intestinal stem cells. May function as a transcriptional repressor by continually deubiquiting histone H2B at the promoters of genes critical for cellular differentiation, thereby preventing histone H3 'Lys-4' trimethylation (H3K4). Controls selective autophagy activation by ubiquitinated proteins. In Drosophila pseudoobscura pseudoobscura (Fruit fly), this protein is Ubiquitin carboxyl-terminal hydrolase 36 (Usp36).